The chain runs to 232 residues: Octanoyltransferase (232 aa).

The BPL/LPL catalytic domain maps to 43–231 (DQTPNYFLFV…HFTQLFDCTV (189 aa)). Residues 88 to 95 (RGGDITYH), 160 to 162 (ALG), and 173 to 175 (GFA) each bind substrate. C191 functions as the Acyl-thioester intermediate in the catalytic mechanism.

It belongs to the LipB family.

It is found in the cytoplasm. It catalyses the reaction octanoyl-[ACP] + L-lysyl-[protein] = N(6)-octanoyl-L-lysyl-[protein] + holo-[ACP] + H(+). The protein operates within protein modification; protein lipoylation via endogenous pathway; protein N(6)-(lipoyl)lysine from octanoyl-[acyl-carrier-protein]: step 1/2. Its function is as follows. Catalyzes the transfer of endogenously produced octanoic acid from octanoyl-acyl-carrier-protein onto the lipoyl domains of lipoate-dependent enzymes. Lipoyl-ACP can also act as a substrate although octanoyl-ACP is likely to be the physiological substrate. The chain is Octanoyltransferase from Flavobacterium psychrophilum (strain ATCC 49511 / DSM 21280 / CIP 103535 / JIP02/86).